The following is a 275-amino-acid chain: tRNA pseudouridine synthase A (275 aa).

D72 acts as the Nucleophile in catalysis. Position 133 (Y133) interacts with substrate.

It belongs to the tRNA pseudouridine synthase TruA family. Homodimer.

The catalysed reaction is uridine(38/39/40) in tRNA = pseudouridine(38/39/40) in tRNA. In terms of biological role, formation of pseudouridine at positions 38, 39 and 40 in the anticodon stem and loop of transfer RNAs. This Gluconobacter oxydans (strain 621H) (Gluconobacter suboxydans) protein is tRNA pseudouridine synthase A.